The sequence spans 336 residues: tRNA N6-adenosine threonylcarbamoyltransferase (336 aa).

Residues His-108 and His-112 each coordinate Fe cation. Substrate contacts are provided by residues 129–133 (LISGG), Asp-161, Glu-178, and Ser-258. A Fe cation-binding site is contributed by Asp-286.

The protein belongs to the KAE1 / TsaD family. Requires Fe(2+) as cofactor.

It is found in the cytoplasm. The catalysed reaction is L-threonylcarbamoyladenylate + adenosine(37) in tRNA = N(6)-L-threonylcarbamoyladenosine(37) in tRNA + AMP + H(+). Functionally, required for the formation of a threonylcarbamoyl group on adenosine at position 37 (t(6)A37) in tRNAs that read codons beginning with adenine. Is probably involved in the transfer of the threonylcarbamoyl moiety of threonylcarbamoyl-AMP (TC-AMP) to the N6 group of A37. The sequence is that of tRNA N6-adenosine threonylcarbamoyltransferase from Pyrobaculum neutrophilum (strain DSM 2338 / JCM 9278 / NBRC 100436 / V24Sta) (Thermoproteus neutrophilus).